The sequence spans 773 residues: Membrane-bound aldehyde dehydrogenase [pyrroloquinoline-quinone] (773 aa).

A signal peptide (tat-type signal) is located at residues 1–44; that stretch reads MGRLNRFRLGKDGRREQASLSRRGFLVTSLGAGVMFGFARPSSA.

Pyrroloquinoline quinone serves as cofactor. Post-translationally, predicted to be exported by the Tat system. The position of the signal peptide cleavage has been experimentally proven.

Its subcellular location is the cell inner membrane. It carries out the reaction an aldehyde + a quinone + H2O = a quinol + a carboxylate + H(+). In Gluconacetobacter polyoxogenes (Acetobacter polyoxogenes), this protein is Membrane-bound aldehyde dehydrogenase [pyrroloquinoline-quinone].